The chain runs to 290 residues: Eukaryotic translation initiation factor 3 subunit F-2 (290 aa).

The MPN domain maps to 12 to 150 (VRLQPLVLFQ…TRLYCAVTMG (139 aa)).

It belongs to the eIF-3 subunit F family. In terms of assembly, component of the eukaryotic translation initiation factor 3 (eIF-3) complex. The eIF-3 complex interacts with pix.

Its subcellular location is the cytoplasm. Its function is as follows. Component of the eukaryotic translation initiation factor 3 (eIF-3) complex, which is involved in protein synthesis of a specialized repertoire of mRNAs and, together with other initiation factors, stimulates binding of mRNA and methionyl-tRNAi to the 40S ribosome. The eIF-3 complex specifically targets and initiates translation of a subset of mRNAs involved in cell proliferation. The polypeptide is Eukaryotic translation initiation factor 3 subunit F-2 (Drosophila mojavensis (Fruit fly)).